Here is a 430-residue protein sequence, read N- to C-terminus: Hydrogenobyrinate a,c-diamide synthase (430 aa).

Residues 239–422 (RIGVARDAAF…IHFYLPSDPL (184 aa)) enclose the GATase cobBQ-type domain. Cysteine 321 serves as the catalytic Nucleophile.

This sequence belongs to the CobB/CbiA family. Mg(2+) is required as a cofactor.

It catalyses the reaction hydrogenobyrinate + 2 L-glutamine + 2 ATP + 2 H2O = hydrogenobyrinate a,c-diamide + 2 L-glutamate + 2 ADP + 2 phosphate + 2 H(+). Its pathway is cofactor biosynthesis; adenosylcobalamin biosynthesis; cob(II)yrinate a,c-diamide from precorrin-2 (aerobic route): step 9/10. Functionally, catalyzes the ATP-dependent amidation of the two carboxylate groups at positions a and c of hydrogenobyrinate, using either L-glutamine or ammonia as the nitrogen source. This Stutzerimonas stutzeri (strain A1501) (Pseudomonas stutzeri) protein is Hydrogenobyrinate a,c-diamide synthase.